The chain runs to 162 residues: UPF0303 protein Arad_3071 (162 aa).

Belongs to the UPF0303 family.

The polypeptide is UPF0303 protein Arad_3071 (Rhizobium rhizogenes (strain K84 / ATCC BAA-868) (Agrobacterium radiobacter)).